Reading from the N-terminus, the 328-residue chain is Peroxidase 71 (328 aa).

A signal peptide spans 1 to 23 (MGLVRSLCLLITFLNCLIISVHG). 4 cysteine pairs are disulfide-bonded: Cys44-Cys120, Cys77-Cys82, Cys126-Cys324, and Cys204-Cys235. His75 acts as the Proton acceptor in catalysis. Residues Asp76, Val79, Gly81, Asp83, and Ser85 each coordinate Ca(2+). Substrate is bound at residue Pro167. Position 197 (His197) interacts with heme b. Thr198 contacts Ca(2+). N-linked (GlcNAc...) asparagine glycosylation occurs at Asn213. Positions 248, 251, and 256 each coordinate Ca(2+). An N-linked (GlcNAc...) asparagine glycan is attached at Asn262.

It belongs to the peroxidase family. Classical plant (class III) peroxidase subfamily. Heme b serves as cofactor. Requires Ca(2+) as cofactor. In terms of tissue distribution, slightly expressed in roots.

Its subcellular location is the secreted. The catalysed reaction is 2 a phenolic donor + H2O2 = 2 a phenolic radical donor + 2 H2O. Removal of H(2)O(2), oxidation of toxic reductants, biosynthesis and degradation of lignin, suberization, auxin catabolism, response to environmental stresses such as wounding, pathogen attack and oxidative stress. These functions might be dependent on each isozyme/isoform in each plant tissue. In Arabidopsis thaliana (Mouse-ear cress), this protein is Peroxidase 71 (PER71).